The chain runs to 422 residues: UPF0761 membrane protein Paes_1471 (422 aa).

6 consecutive transmembrane segments (helical) span residues 47 to 67, 103 to 123, 143 to 163, 185 to 205, 208 to 228, and 247 to 267; these read LLSI…SPVF, SVPT…ISTI, FTLY…SLVA, LLLL…ILVP, KVKF…FEFS, and GALS…VVAL.

Belongs to the UPF0761 family.

It localises to the cell inner membrane. This is UPF0761 membrane protein Paes_1471 from Prosthecochloris aestuarii (strain DSM 271 / SK 413).